The following is a 28-amino-acid chain: Somatostatin-2 (28 aa).

Cys-17 and Cys-28 are joined by a disulfide.

Belongs to the somatostatin family.

It localises to the secreted. In terms of biological role, somatostatin inhibits the release of somatotropin. In Oreochromis niloticus (Nile tilapia), this protein is Somatostatin-2 (sst2).